Here is a 390-residue protein sequence, read N- to C-terminus: DNA primase small subunit PriS (390 aa).

Residues Asp98, Asp100, and Asp296 contribute to the active site.

The protein belongs to the eukaryotic-type primase small subunit family. Heterodimer of a small subunit (PriS) and a large subunit (PriL). The cofactor is Mg(2+). It depends on Mn(2+) as a cofactor.

Catalytic subunit of DNA primase, an RNA polymerase that catalyzes the synthesis of short RNA molecules used as primers for DNA polymerase during DNA replication. The small subunit contains the primase catalytic core and has DNA synthesis activity on its own. Binding to the large subunit stabilizes and modulates the activity, increasing the rate of DNA synthesis while decreasing the length of the DNA fragments, and conferring RNA synthesis capability. The DNA polymerase activity may enable DNA primase to also catalyze primer extension after primer synthesis. May also play a role in DNA repair. The polypeptide is DNA primase small subunit PriS (Methanococcoides burtonii (strain DSM 6242 / NBRC 107633 / OCM 468 / ACE-M)).